Consider the following 131-residue polypeptide: SPbeta prophage-derived uncharacterized protein YosD (131 aa).

A disordered region spans residues 102–131 (EHNNKKAKNNDTQNQRQIKTSWWQRLTKKD). Positions 111–125 (NDTQNQRQIKTSWWQ) are enriched in polar residues.

The protein is SPbeta prophage-derived uncharacterized protein YosD (yosD) of Bacillus subtilis (strain 168).